The following is a 374-amino-acid chain: MRIQSLFVLFNVAIIAWSYPYEPLRVLQVGENEVMEVPESEKLNLRRRGVKFFDVTKHTSFLPFFNKEEEPTVPTYNYPPEISNKEVVDDSIKNIDKGSMHKNLAKFTSFYTRYYKSDHGFESAEWLAATIANITKDIPQDTLTIEHFDHKEWKQYSIIVRVTGSTTPEDIIIIGSHQDSINLLLPSIMAAPGADDNGSGTVTNMEALRLYTENFLKRGFRPNNTVEFHFYSAEEGGLLGSLDVFTAYAKQKKHVRAMLQQDMTGYVSDPEDEHVGIVTDYTTPALTDFIKLIINSYLSIPYRDTQCGYACSDHGSATRNGFPGSFVIESEFKKTNKYIHSTMDTLDRLSLAHMAEHTKIVLGVIIELGSWSAW.

The N-terminal stretch at 1-18 (MRIQSLFVLFNVAIIAWS) is a signal peptide. Residues His-177, Asp-196, Glu-235, Asp-262, and His-340 each contribute to the Zn(2+) site.

The protein belongs to the peptidase M28 family. M28E subfamily. Zn(2+) serves as cofactor.

The polypeptide is Probable aminopeptidase YDR415C (Saccharomyces cerevisiae (strain ATCC 204508 / S288c) (Baker's yeast)).